The chain runs to 368 residues: Probable dual-specificity RNA methyltransferase RlmN (368 aa).

The Proton acceptor role is filled by Glu109. The region spanning 115–355 is the Radical SAM core domain; sequence YPDRVTMCIS…VTIRDTRGQE (241 aa). Cys122 and Cys360 are disulfide-bonded. [4Fe-4S] cluster-binding residues include Cys129, Cys133, and Cys136. S-adenosyl-L-methionine contacts are provided by residues 184–185, Ser218, 241–243, and Asn317; these read GE and SLH. Catalysis depends on Cys360, which acts as the S-methylcysteine intermediate.

This sequence belongs to the radical SAM superfamily. RlmN family. The cofactor is [4Fe-4S] cluster.

The protein localises to the cytoplasm. The catalysed reaction is adenosine(2503) in 23S rRNA + 2 reduced [2Fe-2S]-[ferredoxin] + 2 S-adenosyl-L-methionine = 2-methyladenosine(2503) in 23S rRNA + 5'-deoxyadenosine + L-methionine + 2 oxidized [2Fe-2S]-[ferredoxin] + S-adenosyl-L-homocysteine. The enzyme catalyses adenosine(37) in tRNA + 2 reduced [2Fe-2S]-[ferredoxin] + 2 S-adenosyl-L-methionine = 2-methyladenosine(37) in tRNA + 5'-deoxyadenosine + L-methionine + 2 oxidized [2Fe-2S]-[ferredoxin] + S-adenosyl-L-homocysteine. In terms of biological role, specifically methylates position 2 of adenine 2503 in 23S rRNA and position 2 of adenine 37 in tRNAs. This Streptomyces coelicolor (strain ATCC BAA-471 / A3(2) / M145) protein is Probable dual-specificity RNA methyltransferase RlmN.